Here is an 888-residue protein sequence, read N- to C-terminus: Transmembrane channel-like protein 2 (888 aa).

The disordered stretch occupies residues 1 to 128; sequence MSPQLKSLDE…SLGSSVSTGD (128 aa). Residues 1 to 228 lie on the Cytoplasmic side of the membrane; it reads MSPQLKSLDE…KIKDIESHFG (228 aa). Composition is skewed to basic and acidic residues over residues 7 to 16, 32 to 44, and 87 to 110; these read SLDEEGDKSA, DGHRAQSSRKDPA, and RTSLKEQRASPKKEREALRKEAGK. Positions 117-128 are enriched in polar residues; the sequence is STSLGSSVSTGD. A helical transmembrane segment spans residues 229-266; it reads SSVASYFIFLRWMYGVNLVLFGLIFGLVIIPEVLMGMP. Residues 267-317 lie on the Extracellular side of the membrane; that stretch reads YGSIPRKTVPRAEEERAMDFSVLWDFEGYIKYSALFYGYYNNQRTIGWLRY. A helical membrane pass occupies residues 318-350; sequence RLPMAYFMVGVSVFGYSLMIVIRSMASNTQGST. Topologically, residues 351–406 are cytoplasmic; the sequence is SEGDSDSFTFSFKMFTSWDYLIGNSETADNKYVSITTSFKESIVDEQESNKEGNIH. Residues 407–437 form a helical membrane-spanning segment; the sequence is LTRFLRVLANFLILCCLCGSGYLIYFVVKRS. The Extracellular portion of the chain corresponds to 438-447; the sequence is QEFSKMQNVS. Residues 448–475 form a helical membrane-spanning segment; that stretch reads WYERNEVEIVMSLLGMFCPPLFETIAAL. Topologically, residues 476–479 are cytoplasmic; sequence ENYH. A helical transmembrane segment spans residues 480–514; that stretch reads PRTGLKWQLGRIFALFLGNLYTFLLALMDDVHLKL. Residues 515-556 are Extracellular-facing; sequence SNEEKIKNITHWTLFNYYNSSGGNESVPRPPPHPADVPRGSC. The chain crosses the membrane as a helical span at residues 557–594; that stretch reads WETAVGIEFMRLTVSDMLVTYLTILVGDFLRACFVRFM. The Cytoplasmic portion of the chain corresponds to 595 to 613; the sequence is NHCWCWDLEAGFPSYAEFD. Residues 614-634 form a helical membrane-spanning segment; that stretch reads ISGNVLGLIFNQGMIWMGSFY. Residues 635–637 lie on the Extracellular side of the membrane; that stretch reads APG. The chain crosses the membrane as a helical span at residues 638–660; sequence LVGINVLRLLTSMYFQCWAVMSS. Over 661–674 the chain is Cytoplasmic; sequence NVPHERVFKASRSN. A helical membrane pass occupies residues 675 to 698; the sequence is NFYMGLLLLVLFLSLLPVAYTVMS. Topologically, residues 699–741 are extracellular; it reads LPPSFDCGPFSGKNRMYDVLHETIENDFPKFLGKIFAFLANPG. A helical transmembrane segment spans residues 742 to 775; it reads LIIPAILLMFLAIYYLNSVSKSLSRANAQLRKKI. The Cytoplasmic portion of the chain corresponds to 776-888; the sequence is QALREVEKNH…SGKRTQRPHN (113 aa). A disordered region spans residues 813–888; that stretch reads LTKEEPTSHS…SGKRTQRPHN (76 aa). 2 stretches are compositionally biased toward polar residues: residues 836–851 and 866–881; these read PHTSSTEGGASPSTSW and GQPQSQTYTGRSPSGK.

It belongs to the TMC family. In terms of assembly, forms the MET channel composed of TMC dimer (TMC1 or TMC2), TMIE, TOMT, CIB (CIB2 or CIB3), LHFPL5 and PDH15. The interaction of TMC1 and TMC2 with TOMT is required for the transportation of TMC1/2 into the stereocilia of hair cells. Interacts (via N-terminus) with both isoforms CD1 and CD3 of PCDH15. Can form a heterodimer with TMC1, TMC5 or TMC7. As to expression, inner ear and testis. Expressed in cochlear inner and outer hair cells and vestibular organ hair cells.

It is found in the cell membrane. It carries out the reaction Ca(2+)(in) = Ca(2+)(out). Functionally, pore-forming subunit of the mechanotransducer (MET) non-selective cation channel complex located at the tips of stereocilia of cochlear hair cells and that mediates sensory transduction in the auditory system. The MET complex is composed of two dimeric pore-forming ion-conducting transmembrane TMC (TMC1 or TMC2) subunits, several auxiliary proteins including LHFPL5, TMIE, CIB2/3 and TOMT, the tip-link PCDH15, and possibly the PIEZO subunits. MET channel is activated by tension in the tip-link extending from the side wall of one stereocilium to the tip of the adjacent shorter stereocilium, where the channel is located. TMC2 MET channel is highly permeable to calcium and likely transports monovalent cations. Also involved in vestibular hair cell transduction current of the mammalian inner ear. This chain is Transmembrane channel-like protein 2, found in Mus musculus (Mouse).